Here is a 427-residue protein sequence, read N- to C-terminus: MSEEQKTISISELESMNIKQLYEIAKSLGIPRYTSMRKRDLIFAILKAQTESTGYFFGEGVLEIHPEGFGFLRRIEDNLLPSNDDIYISPSQIRKFNLNTGDIISGVIRKPKEGEKYFAMIKIEAINYRPVEAVNDRVNFDNLTPDYPRERFILETDPKIYSTRLIDLFAPIGKGQRGMIVAPPKAGKTTILKEIANGIAENHPDTIRIILLIDERPEEVTDIRESTNAIVIAAPFDMPPDKQVKVAELTLEMAKRLVEFNYDVVILLDSLTRLARVYNIVVPPSGKLLTGGVDPAALYKPKRFFGAARNTREGGSLTIIATALVETGSKMDEVIFEEFKGTGNMELVLSRQLANKRIFPAINLLLSGTRREELLLDEETLKKVWLLRRMLSAMTEEEGLTLILNKLSETSSNEEFLKLIDKEKARY.

The Rho RNA-BD domain maps to 55–130 (YFFGEGVLEI…IKIEAINYRP (76 aa)). Residues 173–178 (GKGQRG), 185–190 (KAGKTT), and Arg-216 contribute to the ATP site.

Belongs to the Rho family. As to quaternary structure, homohexamer. The homohexamer assembles into an open ring structure.

Functionally, facilitates transcription termination by a mechanism that involves Rho binding to the nascent RNA, activation of Rho's RNA-dependent ATPase activity, and release of the mRNA from the DNA template. This is Transcription termination factor Rho from Thermotoga maritima (strain ATCC 43589 / DSM 3109 / JCM 10099 / NBRC 100826 / MSB8).